Here is a 917-residue protein sequence, read N- to C-terminus: DNA topoisomerase 1 beta (917 aa).

The interval 1–368 is disordered; that stretch reads MATEAFVKPV…SLPSGDGQKK (368 aa). Residues 32 to 63 show a composition bias toward polar residues; that stretch reads RNSNTAATTNRPSPINNAMRNSAIGSTKSSPP. The span at 66 to 82 shows a compositional bias: low complexity; it reads SPLTSPNRSASSSTRSS. The span at 89–100 shows a compositional bias: polar residues; it reads PSSSSVQRSTLK. Composition is skewed to basic and acidic residues over residues 102-116 and 134-149; these read PLRD…ERNG and DKPL…KEVT. Residues 150-170 show a composition bias toward polar residues; it reads KQPSSSGRGSTQQAVQKSNMR. A compositionally biased stretch (basic and acidic residues) spans 177–187; it reads YTKKKVLDERA. Residues 189-205 are compositionally biased toward polar residues; it reads MSSTVQTKTSVGTSSSK. Basic and acidic residues-rich tracts occupy residues 256–265 and 296–307; these read KLSEPARPVK and VKEDNSDGDDHV. A Phosphoserine modification is found at Ser-301. Residues 316–338 show a composition bias toward low complexity; that stretch reads DSSNNKSSSAKPSSSKMIASSSR. Interaction with DNA stretches follow at residues 575-576, 638-643, and 729-731; these read KY, RAGNEK, and TAK. Positions 582-912 constitute a Topo IB-type catalytic domain; that stretch reads SSSLKGQSDK…MDVDPEFRFC (331 aa). Positions 779–858 form a coiled coil; sequence VSKSHGAQVE…ERDMQTKEDM (80 aa). Tyr-870 serves as the catalytic O-(3'-phospho-DNA)-tyrosine intermediate.

Belongs to the type IB topoisomerase family.

Its subcellular location is the nucleus. The enzyme catalyses ATP-independent breakage of single-stranded DNA, followed by passage and rejoining.. Its function is as follows. Releases the supercoiling and torsional tension of DNA introduced during the DNA replication and transcription by transiently cleaving and rejoining one strand of the DNA duplex. Introduces a single-strand break via transesterification at a target site in duplex DNA. The scissile phosphodiester is attacked by the catalytic tyrosine of the enzyme, resulting in the formation of a DNA-(3'-phosphotyrosyl)-enzyme intermediate and the expulsion of a 5'-OH DNA strand. The free DNA strand then rotates around the intact phosphodiester bond on the opposing strand, thus removing DNA supercoils. Finally, in the religation step, the DNA 5'-OH attacks the covalent intermediate to expel the active-site tyrosine and restore the DNA phosphodiester backbone. Topoisomerases 1 enzymes (TOP1A and TOP1B) are essential for plant survival. The protein is DNA topoisomerase 1 beta of Arabidopsis thaliana (Mouse-ear cress).